Here is a 395-residue protein sequence, read N- to C-terminus: MGKLENASWIHDSLMKYLNSTEEYLAYLCGPKRSDLSLPVSVVYALIFVVGVIGNLLVCLVIARHQTLKTPTNYYLFSLAVSDLLVLLLGMPLEVYELWHNYPFLFGPVGCYFKTALFETVCFASILSVTTVSIERYVAIVHPFRAKLESTRRRALRILSLVWSFSVVFSLPNTSIHGIKFQQFPNGSSVPGSATCTVTKPIWVYNFIIQATSFLFYILPMTLISVLYYLMGLRLKRDESLEADKVTVNIHRPSRKSVTKMLFVLVLVFAICWTPFHVDRLFFSFVDEWTESLAAVFNLIHVVSGVFFYLSSAVNPIIYNLLSRRFRAAFRNVVSPSCKWCHPQHRPQGPPAQKVIFLTECHLVELTEDAGPQFPCQSSIHNTQLTTVPCVEEVP.

Residues 1–41 (MGKLENASWIHDSLMKYLNSTEEYLAYLCGPKRSDLSLPVS) lie on the Extracellular side of the membrane. N6 and N19 each carry an N-linked (GlcNAc...) asparagine glycan. Residues 42-62 (VVYALIFVVGVIGNLLVCLVI) traverse the membrane as a helical segment. Residues 63–74 (ARHQTLKTPTNY) lie on the Cytoplasmic side of the membrane. A helical transmembrane segment spans residues 75–95 (YLFSLAVSDLLVLLLGMPLEV). At 96-115 (YELWHNYPFLFGPVGCYFKT) the chain is on the extracellular side. A disulfide bridge links C111 with C196. A helical transmembrane segment spans residues 116-138 (ALFETVCFASILSVTTVSIERYV). Over 139–157 (AIVHPFRAKLESTRRRALR) the chain is Cytoplasmic. The helical transmembrane segment at 158–178 (ILSLVWSFSVVFSLPNTSIHG) threads the bilayer. The Extracellular segment spans residues 179 to 212 (IKFQQFPNGSSVPGSATCTVTKPIWVYNFIIQAT). Residue N186 is glycosylated (N-linked (GlcNAc...) asparagine). The helical transmembrane segment at 213-233 (SFLFYILPMTLISVLYYLMGL) threads the bilayer. At 234 to 257 (RLKRDESLEADKVTVNIHRPSRKS) the chain is on the cytoplasmic side. A helical transmembrane segment spans residues 258–278 (VTKMLFVLVLVFAICWTPFHV). Topologically, residues 279–293 (DRLFFSFVDEWTESL) are extracellular. Residues 294-314 (AAVFNLIHVVSGVFFYLSSAV) form a helical membrane-spanning segment. Topologically, residues 315–395 (NPIIYNLLSR…TTVPCVEEVP (81 aa)) are cytoplasmic.

It belongs to the G-protein coupled receptor 1 family. As to expression, expressed primarily in brain tissues, more specifically in medulla and spinal cord. Widespread distribution in peripheral tissues.

It localises to the cell membrane. In terms of biological role, receptor for the neuromedin-U and neuromedin-S neuropeptides. The polypeptide is Neuromedin-U receptor 2 (Nmur2) (Mus musculus (Mouse)).